A 74-amino-acid chain; its full sequence is Protein krueppel (74 aa).

C2H2-type zinc fingers lie at residues 1–4, 10–32, 38–60, and 66–74; these read ERTH, FECP…MRLH, YHCS…LRVH, and YTCEICDGK.

Belongs to the krueppel C2H2-type zinc-finger protein family.

Its subcellular location is the nucleus. In terms of biological role, krueppel is a gap class segmentation protein. In Musca domestica (House fly), this protein is Protein krueppel (Kr).